Consider the following 332-residue polypeptide: Aspartate carbamoyltransferase catalytic subunit (332 aa).

Residues 1–20 (MPNTHDTKNNVSPSEYAKFD) form a disordered region. Arg-72 and Thr-73 together coordinate carbamoyl phosphate. Lys-100 is a binding site for L-aspartate. Carbamoyl phosphate is bound by residues Arg-122, His-152, and Gln-155. 2 residues coordinate L-aspartate: Arg-186 and Arg-241. 2 residues coordinate carbamoyl phosphate: Gly-282 and Pro-283.

Belongs to the aspartate/ornithine carbamoyltransferase superfamily. ATCase family. As to quaternary structure, heterododecamer (2C3:3R2) of six catalytic PyrB chains organized as two trimers (C3), and six regulatory PyrI chains organized as three dimers (R2).

It catalyses the reaction carbamoyl phosphate + L-aspartate = N-carbamoyl-L-aspartate + phosphate + H(+). It participates in pyrimidine metabolism; UMP biosynthesis via de novo pathway; (S)-dihydroorotate from bicarbonate: step 2/3. Its function is as follows. Catalyzes the condensation of carbamoyl phosphate and aspartate to form carbamoyl aspartate and inorganic phosphate, the committed step in the de novo pyrimidine nucleotide biosynthesis pathway. This is Aspartate carbamoyltransferase catalytic subunit from Psychrobacter sp. (strain TAD1).